The following is a 386-amino-acid chain: Succinate--CoA ligase [ADP-forming] subunit beta (386 aa).

An ATP-grasp domain is found at 9 to 244; the sequence is KEILRSFGVP…LDEEDPAEVE (236 aa). Residues Lys46, 53–55, Glu99, Ala102, and Glu107 contribute to the ATP site; that span reads GRG. Residues Asn199 and Asp213 each contribute to the Mg(2+) site. Residues Asn264 and 321–323 each bind substrate; that span reads GIM.

The protein belongs to the succinate/malate CoA ligase beta subunit family. In terms of assembly, heterotetramer of two alpha and two beta subunits. Mg(2+) is required as a cofactor.

The catalysed reaction is succinate + ATP + CoA = succinyl-CoA + ADP + phosphate. It carries out the reaction GTP + succinate + CoA = succinyl-CoA + GDP + phosphate. The protein operates within carbohydrate metabolism; tricarboxylic acid cycle; succinate from succinyl-CoA (ligase route): step 1/1. Succinyl-CoA synthetase functions in the citric acid cycle (TCA), coupling the hydrolysis of succinyl-CoA to the synthesis of either ATP or GTP and thus represents the only step of substrate-level phosphorylation in the TCA. The beta subunit provides nucleotide specificity of the enzyme and binds the substrate succinate, while the binding sites for coenzyme A and phosphate are found in the alpha subunit. The chain is Succinate--CoA ligase [ADP-forming] subunit beta from Acidovorax ebreus (strain TPSY) (Diaphorobacter sp. (strain TPSY)).